Here is a 376-residue protein sequence, read N- to C-terminus: TATA box-binding protein-like 2 (376 aa).

The segment at 103-184 (PDEVTQENKD…SDSLSLASIT (82 aa)) is disordered. Over residues 108 to 122 (QENKDQPVISKHETE) the composition is skewed to basic and acidic residues. Low complexity predominate over residues 126-159 (ESQSPQSRLPSPSEQDVGLGLNSSSLSNSHSQLH). The segment covering 175 to 184 (SDSLSLASIT) has biased composition (polar residues).

This sequence belongs to the TBP family. In terms of assembly, interacts with TAF3.

It is found in the cytoplasm. The protein resides in the nucleus. In terms of biological role, transcription factor required in complex with TAF3 for the differentiation of myoblasts into myocytes. The complex replaces TFIID at specific promoters at an early stage in the differentiation process. This is TATA box-binding protein-like 2 from Pan troglodytes (Chimpanzee).